The sequence spans 832 residues: MLPFLLATLGTAALNSSNPKDYCYSARIRSTVLQGLPFGGVPTVLALDFMCFLALLFLFSILRKVAWDYGRLALVTDADRLRRQERERVEQEYVASAMHGDSHDRYERLTSVSSSVDFDQRDNGFCSWLTAIFRIKDDEIRDKCGGDAVHYLSFQRHIIGLLVVVGVLSVGIVLPVNFSGDLLENNAYSFGRTTIANLKSGNNLLWLHTSFAFLYLLLTVYSMRRHTSKMRYKEDDLVKRTLFINGISKYAESEKIKKHFEEAYPNCTVLEARPCYNVARLMFLDAERKKAERGKLYFTNLQSKENVPAMINPKPCGHLCCCVVRGCEQVEAIEYYTKLEQRLKEDYRREKEKVNEKPLGMAFVTFHNETITAIILKDFNVCKCQGCTCRGEPRASSCSEALHISNWTVTYAPDPQNIYWEHLSIRGFIWWLRCLVINVVLFILLFFLTTPAIIITTMDKFNVTKPVEYLNNPIITQFFPTLLLWCFSALLPTIVYYSAFFEAHWTRSGENRTTMHKCYTFLIFMVLLLPSLGLSSLDLFFRWLFDKKFLAEAAIRFECVFLPDNGAFFVNYVIASAFIGNAMDLLRIPGLLMYMIRLCLARSAAERRNVKRHQAYEFQFGAAYAWMMCVFTVVMTYSITCPIIVPFGLMYMLLKHLVDRYNLYYAYLPAKLDKKIHSGAVNQVVAAPILCLFWLLFFSTMRTGFLAPTSMFTFVVLVITIVICLCHVCFGHFKYLSAHNYKIEHTETDAVSSRSNGRPPTAGAVPKSAKYIAQVLQDSEGDGDGDGAPGSSGDEPPSSSSQDEELLMPPDGLTDTDFQSCEDSLIENEIHQ.

Residues 1–40 are Extracellular-facing; sequence MLPFLLATLGTAALNSSNPKDYCYSARIRSTVLQGLPFGG. A helical transmembrane segment spans residues 41–65; sequence VPTVLALDFMCFLALLFLFSILRKV. A lipid anchor (S-palmitoyl cysteine) is attached at cysteine 51. The Cytoplasmic portion of the chain corresponds to 66-145; that stretch reads AWDYGRLALV…KDDEIRDKCG (80 aa). The Mediates endoplasmic reticulum retention signature appears at 86–88; sequence RER. Phosphoserine occurs at positions 111, 113, 114, and 115. Residue cysteine 126 is the site of S-palmitoyl cysteine attachment. A helical membrane pass occupies residues 146 to 178; that stretch reads GDAVHYLSFQRHIIGLLVVVGVLSVGIVLPVNF. Residues 179-202 lie on the Extracellular side of the membrane; sequence SGDLLENNAYSFGRTTIANLKSGN. The helical transmembrane segment at 203–227 threads the bilayer; the sequence is NLLWLHTSFAFLYLLLTVYSMRRHT. Residues 228–427 are Cytoplasmic-facing; sequence SKMRYKEDDL…IYWEHLSIRG (200 aa). Residues 231–426 are intracellular linker IL2; confers mechanosensitivity; sequence RYKEDDLVKR…NIYWEHLSIR (196 aa). Residues cysteine 382 and cysteine 398 are each lipidated (S-palmitoyl cysteine). A helical transmembrane segment spans residues 428 to 457; that stretch reads FIWWLRCLVINVVLFILLFFLTTPAIIITT. At 458–472 the chain is on the extracellular side; that stretch reads MDKFNVTKPVEYLNN. The N-linked (GlcNAc...) asparagine glycan is linked to asparagine 462. A helical membrane pass occupies residues 473-502; sequence PIITQFFPTLLLWCFSALLPTIVYYSAFFE. The Cytoplasmic portion of the chain corresponds to 503–506; the sequence is AHWT. The helical transmembrane segment at 507–543 threads the bilayer; that stretch reads RSGENRTTMHKCYTFLIFMVLLLPSLGLSSLDLFFRW. The Extracellular portion of the chain corresponds to 544-566; that stretch reads LFDKKFLAEAAIRFECVFLPDNG. Residues 567 to 599 form a helical membrane-spanning segment; it reads AFFVNYVIASAFIGNAMDLLRIPGLLMYMIRLC. The gating helix stretch occupies residues 567-599; it reads AFFVNYVIASAFIGNAMDLLRIPGLLMYMIRLC. At 600–619 the chain is on the cytoplasmic side; that stretch reads LARSAAERRNVKRHQAYEFQ. A helical transmembrane segment spans residues 620 to 638; it reads FGAAYAWMMCVFTVVMTYS. Residues 639 to 641 are Extracellular-facing; it reads ITC. A helical transmembrane segment spans residues 642–666; the sequence is PIIVPFGLMYMLLKHLVDRYNLYYA. The Cytoplasmic segment spans residues 667 to 673; sequence YLPAKLD. A helical membrane pass occupies residues 674-702; the sequence is KKIHSGAVNQVVAAPILCLFWLLFFSTMR. Residues 703-707 lie on the Extracellular side of the membrane; it reads TGFLA. The chain crosses the membrane as a helical span at residues 708-728; that stretch reads PTSMFTFVVLVITIVICLCHV. 2 S-palmitoyl cysteine lipidation sites follow: cysteine 726 and cysteine 729. The Cytoplasmic segment spans residues 729 to 832; it reads CFGHFKYLSA…DSLIENEIHQ (104 aa). Disordered regions lie at residues 748–767 and 776–818; these read TDAV…AVPK and LQDS…DTDF. A compositionally biased stretch (polar residues) spans 749–758; that stretch reads DAVSSRSNGR. Residues 789–801 are compositionally biased toward low complexity; sequence PGSSGDEPPSSSS.

Belongs to the CSC1 (TC 1.A.17) family. As to quaternary structure, monomer. Interacts with SLC19A2; interaction is required for the phospholipid scramblase activity. Palmitoylation is required for localization to the plasma membrane and stability. Expressed in cochlear hair cells (at protein level). Highly expressed in the subfornical organ of the brain. Expressed in small intestine. In terms of tissue distribution, brain-specific.

It is found in the cell membrane. The protein resides in the endoplasmic reticulum membrane. Its subcellular location is the lysosome membrane. It localises to the early endosome membrane. It carries out the reaction Ca(2+)(in) = Ca(2+)(out). It catalyses the reaction Mg(2+)(in) = Mg(2+)(out). The enzyme catalyses K(+)(in) = K(+)(out). The catalysed reaction is Na(+)(in) = Na(+)(out). It carries out the reaction Cs(+)(in) = Cs(+)(out). It catalyses the reaction a 1,2-diacyl-sn-glycero-3-phosphocholine(in) = a 1,2-diacyl-sn-glycero-3-phosphocholine(out). The enzyme catalyses a sphingomyelin(in) = a sphingomyelin(out). Its function is as follows. Mechanosensitive cation channel with low conductance and high activation threshold. Osmosensitive cation channel preferentially activated by hypotonic stress. Also acts as a phospholipid scramblase in response to changes in membrane structure: upon changes in membrane curvature and thickness, alters its conformation and translocates phospholipids, such as phosphatidylcholine and sphingomyelin, thereby controlling plasma membrane lipid distribution. Forms a heterodimer with SLC19A2, which mediates phospholipid scramblase activity following Ca(2+) stimulation. Expressed in excitatory neurons of the subfornical organ and functions as a thirst receptor that mediates neuronal response to hyperosmolality to drive thirst and drinking behavior. Facilitates intestinal motility by promoting proliferation of intestinal stem cells. Essential for the baby's first breath and respiration throughout life. Upon lung inflation conducts cation currents in alveolar type 1 and 2 cells triggering lamellar body exocytosis and surfactant secretion into airspace. Acts as an osmosensor in cochlear outer hair cells (OHCs) where it mediates calcium influx and regulatory volume decrease response. Required for the maintenance of OHC morphology, OHC survival and normal hearing. Brain-specific osmosensitive calcium channel isoform. The chain is Mechanosensitive cation channel TMEM63B from Mus musculus (Mouse).